A 228-amino-acid chain; its full sequence is ATP-dependent dethiobiotin synthetase BioD (228 aa).

13-18 (DVGKTV) contacts ATP. Thr-17 contributes to the Mg(2+) binding site. Residue Lys-38 is part of the active site. Residues Asp-55, 116 to 119 (EGAG), 176 to 177 (NR), and 205 to 207 (PYI) contribute to the ATP site. 2 residues coordinate Mg(2+): Asp-55 and Glu-116.

It belongs to the dethiobiotin synthetase family. As to quaternary structure, homodimer. Mg(2+) is required as a cofactor.

It localises to the cytoplasm. The enzyme catalyses (7R,8S)-7,8-diammoniononanoate + CO2 + ATP = (4R,5S)-dethiobiotin + ADP + phosphate + 3 H(+). It participates in cofactor biosynthesis; biotin biosynthesis; biotin from 7,8-diaminononanoate: step 1/2. In terms of biological role, catalyzes a mechanistically unusual reaction, the ATP-dependent insertion of CO2 between the N7 and N8 nitrogen atoms of 7,8-diaminopelargonic acid (DAPA, also called 7,8-diammoniononanoate) to form a ureido ring. The chain is ATP-dependent dethiobiotin synthetase BioD from Vibrio parahaemolyticus serotype O3:K6 (strain RIMD 2210633).